A 218-amino-acid chain; its full sequence is Tubulin polymerization-promoting protein (218 aa).

Residues 1-46 form a disordered region; sequence MADSKAKPAKAANKTPPKSPGDPARAAKRLSLESEGANEGATAAPE. The segment at 1–115 is mediates interaction with LIMK1; the sequence is MADSKAKPAK…SCRTITFEQF (115 aa). Threonine 15 is modified (phosphothreonine). Serine 19, serine 31, and serine 34 each carry phosphoserine. Threonine 42 carries the phosphothreonine modification. Zn(2+) is bound by residues histidine 60, histidine 71, cysteine 79, and cysteine 82. At threonine 91 the chain carries Phosphothreonine. Serine 106 is subject to Phosphoserine. A glycan (O-linked (GlcNAc) serine) is linked at serine 151. Serine 158 and serine 159 each carry phosphoserine. The disordered stretch occupies residues 166–192; it reads TDTSKFTGSHKERFDQSGKGKGKAGRV. Positions 174–183 are enriched in basic and acidic residues; it reads SHKERFDQSG.

This sequence belongs to the TPPP family. As to quaternary structure, homodimer. Binds tubulin; binding is inhibited by GTP. Interacts with MAPK1. Interacts with GAPDH; the interaction is direct. Interacts with LIMK1 (via the PDZ domain); the interaction is direct. Interacts with LIMK2. Interacts with HDAC6; thereby inhibiting the tubulin deacetylase activity of HDAC6. Interacts with aggregated SNCA; may have a pro-aggregatory role in synucleinopathies. Interacts with DYNLL1. Interacts (via C-terminus) with S100A2, S100A6 and S100B; these interactions inhibit TPPP dimerization. Mg(2+) is required as a cofactor. Phosphorylated by LIMK1 on serine residues; phosphorylation may alter the tubulin polymerization activity. Phosphorylation by LIMK2, but not LIMK1, regulates astral microtubule organization at early stage of mitosis. Phosphorylation by ROCK1 at Ser-31, Ser-106 and Ser-158 inhibits interaction with HDAC6, resulting in decreased acetylation of tubulin, increased cell motility and entry into S-phase. Phosphorylation by CDK1 inhibits the microtubule polymerizing activity. In terms of processing, degraded by the proteasome; zinc-binding inhibits degradation by the proteasome. As to expression, widely expressed with higher expression in brain (at protein level).

Its subcellular location is the golgi outpost. The protein localises to the cytoplasm. It localises to the cytoskeleton. The protein resides in the microtubule organizing center. It is found in the nucleus. Its subcellular location is the spindle. The enzyme catalyses GTP + H2O = GDP + phosphate + H(+). Its function is as follows. Regulator of microtubule dynamics that plays a key role in myelination by promoting elongation of the myelin sheath. Acts as a microtubule nucleation factor in oligodendrocytes: specifically localizes to the postsynaptic Golgi apparatus region, also named Golgi outpost, and promotes microtubule nucleation, an important step for elongation of the myelin sheath. Required for both uniform polarized growth of distal microtubules as well as directing the branching of proximal processes. Shows magnesium-dependent GTPase activity; the role of the GTPase activity is unclear. In addition to microtubule nucleation activity, also involved in microtubule bundling and stabilization of existing microtubules, thereby maintaining the integrity of the microtubule network. Regulates microtubule dynamics by promoting tubulin acetylation: acts by inhibiting the tubulin deacetylase activity of HDAC6. Also regulates cell migration: phosphorylation by ROCK1 inhibits interaction with HDAC6, resulting in decreased acetylation of tubulin and increased cell motility. Plays a role in cell proliferation by regulating the G1/S-phase transition. Involved in astral microtubule organization and mitotic spindle orientation during early stage of mitosis; this process is regulated by phosphorylation by LIMK2. This chain is Tubulin polymerization-promoting protein, found in Mus musculus (Mouse).